Reading from the N-terminus, the 506-residue chain is tRNA (guanine(6)-N(2))-methyltransferase THUMP3 (506 aa).

The segment at 144–172 (KTKRRKLNPNSSKQKIDNGRGDTTVEKDV) is disordered. Residues 157–172 (QKIDNGRGDTTVEKDV) are compositionally biased toward basic and acidic residues. A THUMP domain is found at 170–286 (KDVKKELTNS…DNEVVVGIAL (117 aa)).

This sequence belongs to the methyltransferase superfamily. As to quaternary structure, part of the heterodimeric THUMPD3-TRM112 methyltransferase complex; this complex forms an active tRNA methyltransferase, where TRMT112 acts as an activator of the catalytic subunit THUMPD3.

The protein localises to the cytoplasm. The catalysed reaction is guanosine(6) in tRNA + S-adenosyl-L-methionine = N(2)-methylguanosine(6) in tRNA + S-adenosyl-L-homocysteine + H(+). It carries out the reaction guanosine(7) in tRNA + S-adenosyl-L-methionine = N(2)-methylguanosine(7) in tRNA + S-adenosyl-L-homocysteine + H(+). Its function is as follows. Catalytic subunit of the THUMPD3-TRM112 methyltransferase complex, that specifically mediates the S-adenosyl-L-methionine-dependent N(2)-methylation of guanosine nucleotide at position 6 (m2G6) in tRNAs. This is one of the major tRNA (guanine-N(2))-methyltransferases. Also catalyzes the S-adenosyl-L-methionine-dependent N(2)-methylation of guanosine nucleotide at position 7 of tRNA(Trp). This is tRNA (guanine(6)-N(2))-methyltransferase THUMP3 from Bos taurus (Bovine).